The primary structure comprises 172 residues: Nascent polypeptide-associated complex subunit beta (172 aa).

Disordered stretches follow at residues 36–58 (KTGKGTPRRKMKRAPARSGGDDK) and 142–172 (QNMQKADGDKEADDDDIPDLVAGENFEDKVE). The span at 41–50 (TPRRKMKRAP) shows a compositional bias: basic residues. The NAC-A/B domain occupies 54-119 (GGDDKKLQQT…GEDKELTELV (66 aa)).

This sequence belongs to the NAC-beta family. Part of the nascent polypeptide-associated complex (NAC), consisting of EGD2 and EGD1. NAC associates with ribosomes via EGD1.

Its subcellular location is the cytoplasm. It is found in the nucleus. Its function is as follows. Component of the nascent polypeptide-associated complex (NAC), a dynamic component of the ribosomal exit tunnel, protecting the emerging polypeptides from interaction with other cytoplasmic proteins to ensure appropriate nascent protein targeting. The NAC complex also promotes mitochondrial protein import by enhancing productive ribosome interactions with the outer mitochondrial membrane and blocks the inappropriate interaction of ribosomes translating non-secretory nascent polypeptides with translocation sites in the membrane of the endoplasmic reticulum. EGD1 may act as a transcription factor that exert a negative effect on the expression of several genes that are transcribed by RNA polymerase II. This is Nascent polypeptide-associated complex subunit beta (EGD1) from Pyricularia oryzae (strain 70-15 / ATCC MYA-4617 / FGSC 8958) (Rice blast fungus).